The following is a 338-amino-acid chain: Inositol 2-dehydrogenase 3 (338 aa).

It belongs to the Gfo/Idh/MocA family. As to quaternary structure, homotetramer.

The enzyme catalyses myo-inositol + NAD(+) = scyllo-inosose + NADH + H(+). Involved in the oxidation of myo-inositol (MI) to 2-keto-myo-inositol (2KMI or 2-inosose). This is Inositol 2-dehydrogenase 3 from Saccharopolyspora erythraea (strain ATCC 11635 / DSM 40517 / JCM 4748 / NBRC 13426 / NCIMB 8594 / NRRL 2338).